Here is a 67-residue protein sequence, read N- to C-terminus: Small ribosomal subunit protein eS17 (67 aa).

It belongs to the eukaryotic ribosomal protein eS17 family.

The sequence is that of Small ribosomal subunit protein eS17 from Haloquadratum walsbyi (strain DSM 16790 / HBSQ001).